Consider the following 305-residue polypeptide: tRNA pseudouridine synthase B (305 aa).

D39 functions as the Nucleophile in the catalytic mechanism.

The protein belongs to the pseudouridine synthase TruB family. Type 1 subfamily.

The enzyme catalyses uridine(55) in tRNA = pseudouridine(55) in tRNA. Responsible for synthesis of pseudouridine from uracil-55 in the psi GC loop of transfer RNAs. The protein is tRNA pseudouridine synthase B of Staphylococcus aureus (strain MSSA476).